A 515-amino-acid chain; its full sequence is Maturase K (515 aa).

The protein belongs to the intron maturase 2 family. MatK subfamily.

It is found in the plastid. The protein resides in the chloroplast. In terms of biological role, usually encoded in the trnK tRNA gene intron. Probably assists in splicing its own and other chloroplast group II introns. In Pinus leiophylla (Chihuahua pine), this protein is Maturase K.